Here is a 461-residue protein sequence, read N- to C-terminus: Phosphomethylpyrimidine synthase (461 aa).

Substrate contacts are provided by residues Asn80, Met109, Tyr139, His175, 195 to 197, 236 to 239, and Glu275; these read SRG and DSLR. His279 is a Zn(2+) binding site. Tyr302 provides a ligand contact to substrate. His343 serves as a coordination point for Zn(2+). [4Fe-4S] cluster-binding residues include Cys423, Cys426, and Cys431.

This sequence belongs to the ThiC family. [4Fe-4S] cluster serves as cofactor.

The enzyme catalyses 5-amino-1-(5-phospho-beta-D-ribosyl)imidazole + S-adenosyl-L-methionine = 4-amino-2-methyl-5-(phosphooxymethyl)pyrimidine + CO + 5'-deoxyadenosine + formate + L-methionine + 3 H(+). Its pathway is cofactor biosynthesis; thiamine diphosphate biosynthesis. Catalyzes the synthesis of the hydroxymethylpyrimidine phosphate (HMP-P) moiety of thiamine from aminoimidazole ribotide (AIR) in a radical S-adenosyl-L-methionine (SAM)-dependent reaction. In Picosynechococcus sp. (strain ATCC 27264 / PCC 7002 / PR-6) (Agmenellum quadruplicatum), this protein is Phosphomethylpyrimidine synthase.